We begin with the raw amino-acid sequence, 1238 residues long: MINVNTKWTETQKSAIFTPNCNLLVAAGAGTGKTAVLVERILQKVINDSEEVDIDKLLVVTFTNAAASEMKERVGEALSKLLELNCTSKNLQRQLALLNQSNIMTIHSFCLKVIKNNFHRIDLDPNFRICDDTESKLLKQDALLELFEEKYEEENLGFLNLADGYGGKNDSKLQDIVLSLYEFSQGSPWPKRWLQDVLKDFNLGSDFDFGDTKWAKVLMHNVTVELKGCKNKMKNILNTIENIEGLEHYLEPFKSDIESIDKLINITTWDEIRDEFIKLSFNKLPSKRTDPLVKSYKDKARNTRDEVKKKLISIREDIILCTDDIYENFKEVYPLMKSLTFLVMDFYEKYHNKKSERNMIDFNDIEHFCLEILTSKDKNGDIIPSEAALEYREYFEEIFIDEYQDSNEVQEVIMNMISRKNIYANLFMVGDVKQSIYRFRQARPELFLEKYNSYDEKEGSKNRKIKLSENFRSRKEIIDAINYIFKQIMCREVGELDYGEEECLKSSARYEPFEGNCGGDVELHVVDKKENENKLEDENEEELLDAISVEARLVASKINELVNPSLDQYSFKVYDKEIDNYRSIMYKDIVILMRATQNWAPAFVEELNNSGIPVFADTSVGYFQAIEIKTIISLLQIIDNPLQDIPFIALLRSPIGGFSPEDLIDLRVVNREISFYEILKAIKEHSLELKYSLEHIDERLEYKVEQFFNKLCLWRRKVIHMPIDEFIWHIYIETGYYGFVGAMPGGIQRQANLRMLFERAKQYKNISYKGLFNFINFINKLKSSSTDMGNAKILGENENVVRIMSIHKSKGLEFPVIILSGAGKRFNLTDINKSVLFHKELGLGPEYVNSERHISYPTIVKQVLKRKLKMETLSEEMRILYVAFTRAKEKLIITGTVDNIENTFQRWCEAAYCEEDKLPEYSLINSRNFLDWIGPAVARHPCGEIIRKVCPFEYNLNLITGDDSKWKVFVYSKDNFKSTLDENIDEDIIGKIKSLELDNNKEIYKNEVYRRLNWTYKYEQSSKIAAKFSVSELKRRFKLIDTENGIEFMEPIYLKKPAFLRESKGLTPSERGIVMHLVMQHIDIDKVGSYEQIKEQVDKLVFREFITEAEAKSISVYKIIKFFNSEIGIRMKKSNNVYREVPFYMEIESTELYKQLPQHIYRDEKVLIQGIIDCYFEENNELILVDYKTDHVGDIDSIKEKYQVQIYYYGRALEKLTGKKVKKKYLYLFSKDYILDLS.

The region spanning 6 to 474 (TKWTETQKSA…IKLSENFRSR (469 aa)) is the UvrD-like helicase ATP-binding domain. 27–34 (AGAGTGKT) is an ATP binding site. Residues 512-811 (PFEGNCGGDV…RIMSIHKSKG (300 aa)) enclose the UvrD-like helicase C-terminal domain.

It belongs to the helicase family. AddA subfamily. As to quaternary structure, heterodimer of AddA and AddB/RexB. It depends on Mg(2+) as a cofactor.

The enzyme catalyses Couples ATP hydrolysis with the unwinding of duplex DNA by translocating in the 3'-5' direction.. It catalyses the reaction ATP + H2O = ADP + phosphate + H(+). The heterodimer acts as both an ATP-dependent DNA helicase and an ATP-dependent, dual-direction single-stranded exonuclease. Recognizes the chi site generating a DNA molecule suitable for the initiation of homologous recombination. The AddA nuclease domain is required for chi fragment generation; this subunit has the helicase and 3' -&gt; 5' nuclease activities. The protein is ATP-dependent helicase/nuclease subunit A of Clostridium kluyveri (strain NBRC 12016).